Here is a 290-residue protein sequence, read N- to C-terminus: Eukaryotic translation initiation factor 3 subunit G (290 aa).

The tract at residues 1-34 (MSRLGNRAADWADDEEFDDPSALPAQQVTTNKDG) is disordered. Residues 210–288 (ATLRVTNVSE…LILRVEFAKR (79 aa)) enclose the RRM domain.

The protein belongs to the eIF-3 subunit G family. In terms of assembly, component of the eukaryotic translation initiation factor 3 (eIF-3) complex.

It is found in the cytoplasm. RNA-binding component of the eukaryotic translation initiation factor 3 (eIF-3) complex, which is involved in protein synthesis of a specialized repertoire of mRNAs and, together with other initiation factors, stimulates binding of mRNA and methionyl-tRNAi to the 40S ribosome. The eIF-3 complex specifically targets and initiates translation of a subset of mRNAs involved in cell proliferation. This subunit can bind 18S rRNA. The protein is Eukaryotic translation initiation factor 3 subunit G of Neosartorya fischeri (strain ATCC 1020 / DSM 3700 / CBS 544.65 / FGSC A1164 / JCM 1740 / NRRL 181 / WB 181) (Aspergillus fischerianus).